We begin with the raw amino-acid sequence, 464 residues long: Fumarate hydratase class II (464 aa).

Substrate is bound by residues 98 to 100, 129 to 132, 139 to 141, and T187; these read SGT, HPND, and SSN. The Proton donor/acceptor role is filled by H188. S318 is an active-site residue. Substrate-binding positions include S319 and 324–326; that span reads KVN.

The protein belongs to the class-II fumarase/aspartase family. Fumarase subfamily. Homotetramer.

It is found in the cytoplasm. It carries out the reaction (S)-malate = fumarate + H2O. It functions in the pathway carbohydrate metabolism; tricarboxylic acid cycle; (S)-malate from fumarate: step 1/1. Functionally, involved in the TCA cycle. Catalyzes the stereospecific interconversion of fumarate to L-malate. This chain is Fumarate hydratase class II, found in Wigglesworthia glossinidia brevipalpis.